The primary structure comprises 330 residues: Aspartate--ammonia ligase (330 aa).

Belongs to the class-II aminoacyl-tRNA synthetase family. AsnA subfamily.

The protein resides in the cytoplasm. It catalyses the reaction L-aspartate + NH4(+) + ATP = L-asparagine + AMP + diphosphate + H(+). Its pathway is amino-acid biosynthesis; L-asparagine biosynthesis; L-asparagine from L-aspartate (ammonia route): step 1/1. This is Aspartate--ammonia ligase from Pectobacterium carotovorum subsp. carotovorum (strain PC1).